The primary structure comprises 428 residues: Light-independent protochlorophyllide reductase subunit N (428 aa).

Positions 31, 56, and 117 each coordinate [4Fe-4S] cluster.

The protein belongs to the BchN/ChlN family. Protochlorophyllide reductase is composed of three subunits; BchL, BchN and BchB. Forms a heterotetramer of two BchB and two BchN subunits. [4Fe-4S] cluster is required as a cofactor.

The enzyme catalyses chlorophyllide a + oxidized 2[4Fe-4S]-[ferredoxin] + 2 ADP + 2 phosphate = protochlorophyllide a + reduced 2[4Fe-4S]-[ferredoxin] + 2 ATP + 2 H2O. It functions in the pathway porphyrin-containing compound metabolism; bacteriochlorophyll biosynthesis (light-independent). Functionally, component of the dark-operative protochlorophyllide reductase (DPOR) that uses Mg-ATP and reduced ferredoxin to reduce ring D of protochlorophyllide (Pchlide) to form chlorophyllide a (Chlide). This reaction is light-independent. The NB-protein (BchN-BchB) is the catalytic component of the complex. This chain is Light-independent protochlorophyllide reductase subunit N, found in Rhodopseudomonas palustris (strain HaA2).